The sequence spans 185 residues: MIEASKLRAGMTFEAEGKLIRVLEASHHKPGKGNTIMRMKLRDVRTGSTFDTTYRPDEKFEQAIIETVPAQYLYKMDDTAYFMNTETYDQYEIPVANVEQELLYILENSDVKIQFYGTEVIGVQVPTTVELTVTETQPSIKGATVTGSGKPATLETGLVVNVPDFIEVGQKLIINTAEGTYVSRA.

Belongs to the elongation factor P family.

Its subcellular location is the cytoplasm. It participates in protein biosynthesis; polypeptide chain elongation. Functionally, involved in peptide bond synthesis. Stimulates efficient translation and peptide-bond synthesis on native or reconstituted 70S ribosomes in vitro. Probably functions indirectly by altering the affinity of the ribosome for aminoacyl-tRNA, thus increasing their reactivity as acceptors for peptidyl transferase. The chain is Elongation factor P from Streptococcus equi subsp. zooepidemicus (strain MGCS10565).